The primary structure comprises 290 residues: Programmed cell death 1 ligand 1 (290 aa).

The signal sequence occupies residues 1–18 (MRIFAVFIFMTYWHLLNA). Residues 19–127 (FTVTVPKDLY…YGGADYKRIT (109 aa)) form the Ig-like V-type domain. The Extracellular segment spans residues 19-238 (FTVTVPKDLY…LPLAHPPNER (220 aa)). An N-linked (GlcNAc...) asparagine glycan is attached at asparagine 35. Cystine bridges form between cysteine 40-cysteine 114 and cysteine 155-cysteine 209. The Ig-like C2-type domain maps to 133 to 225 (PYNKINQRIL…PEENHTAELV (93 aa)). N-linked (GlcNAc...) asparagine glycosylation is found at asparagine 192, asparagine 200, and asparagine 219. The chain crosses the membrane as a helical span at residues 239–259 (THLVILGAILLCLGVALTFIF). Residues 260 to 290 (RLRKGRMMDVKKCGIQDTNSKKQSDTHLEET) lie on the Cytoplasmic side of the membrane.

Belongs to the immunoglobulin superfamily. BTN/MOG family. As to quaternary structure, interacts with PDCD1. Interacts (via transmembrane domain) with CMTM4 and CMTM6. Interacts with (phosphorylated) STAT3; promoting nuclear translocation. Interacts with CD80. In terms of assembly, may form homomultimers. Post-translationally, ubiquitinated; STUB1 likely mediates polyubiquitination of PD-L1/CD274 triggering its degradation. Ubiquitinated by MARCHF8; leading to degradation. Deubiquitinated by USP22; leading to stabilization. In terms of tissue distribution, highly expressed in the heart, skeletal muscle, placenta and lung. Weakly expressed in the thymus, spleen, kidney and liver. Expressed on activated T- and B-cells, dendritic cells, keratinocytes and monocytes. As to expression, widely expressed, highest in lung, liver and pituitary and in various peripheral blood cells, including neutrophils and some subtypes of lymphoid and myeloid cells.

Its subcellular location is the cell membrane. The protein localises to the early endosome membrane. The protein resides in the recycling endosome membrane. It is found in the nucleus. It localises to the endomembrane system. Its subcellular location is the secreted. Its function is as follows. Plays a critical role in induction and maintenance of immune tolerance to self. As a ligand for the inhibitory receptor PDCD1/PD-1, modulates the activation threshold of T-cells and limits T-cell effector response. Through a yet unknown activating receptor, may costimulate T-cell subsets that predominantly produce interleukin-10 (IL10). Can also act as a transcription coactivator: in response to hypoxia, translocates into the nucleus via its interaction with phosphorylated STAT3 and promotes transcription of GSDMC, leading to pyroptosis. Functionally, the PDCD1-mediated inhibitory pathway is exploited by tumors to attenuate anti-tumor immunity and escape destruction by the immune system, thereby facilitating tumor survival. The interaction with PDCD1/PD-1 inhibits cytotoxic T lymphocytes (CTLs) effector function. The blockage of the PDCD1-mediated pathway results in the reversal of the exhausted T-cell phenotype and the normalization of the anti-tumor response, providing a rationale for cancer immunotherapy. The protein is Programmed cell death 1 ligand 1 of Homo sapiens (Human).